Here is a 147-residue protein sequence, read N- to C-terminus: UPF0306 protein YhbP (147 aa).

It belongs to the UPF0306 family.

The protein is UPF0306 protein YhbP of Shigella dysenteriae serotype 1 (strain Sd197).